We begin with the raw amino-acid sequence, 523 residues long: 2-isopropylmalate synthase (523 aa).

Positions 5-267 (VVIFDTTLRD…QTRINHNEIW (263 aa)) constitute a Pyruvate carboxyltransferase domain. Mn(2+) contacts are provided by Asp-14, His-202, His-204, and Asn-238. Positions 392–523 (RMDYFSVQSG…QNKENNKETV (132 aa)) are regulatory domain.

It belongs to the alpha-IPM synthase/homocitrate synthase family. LeuA type 1 subfamily. In terms of assembly, homodimer. Mn(2+) serves as cofactor.

The protein localises to the cytoplasm. The catalysed reaction is 3-methyl-2-oxobutanoate + acetyl-CoA + H2O = (2S)-2-isopropylmalate + CoA + H(+). The protein operates within amino-acid biosynthesis; L-leucine biosynthesis; L-leucine from 3-methyl-2-oxobutanoate: step 1/4. In terms of biological role, catalyzes the condensation of the acetyl group of acetyl-CoA with 3-methyl-2-oxobutanoate (2-ketoisovalerate) to form 3-carboxy-3-hydroxy-4-methylpentanoate (2-isopropylmalate). This is 2-isopropylmalate synthase from Enterobacter sp. (strain 638).